The chain runs to 294 residues: UDP-N-acetylenolpyruvoylglucosamine reductase (294 aa).

In terms of domain architecture, FAD-binding PCMH-type spans 26 to 189 (VGGQADVLFK…IEAEFKGVSS (164 aa)). The active site involves Arg-169. The active-site Proton donor is the Cys-218. The active site involves Glu-288.

The protein belongs to the MurB family. The cofactor is FAD.

The protein resides in the cytoplasm. It catalyses the reaction UDP-N-acetyl-alpha-D-muramate + NADP(+) = UDP-N-acetyl-3-O-(1-carboxyvinyl)-alpha-D-glucosamine + NADPH + H(+). It functions in the pathway cell wall biogenesis; peptidoglycan biosynthesis. In terms of biological role, cell wall formation. The protein is UDP-N-acetylenolpyruvoylglucosamine reductase of Wolbachia pipientis subsp. Culex pipiens (strain wPip).